The sequence spans 109 residues: Nucleoid-associated protein swp_1717 (109 aa).

The segment at 88–109 (QKDKMAEVTGGMQLPPGMKMPF) is disordered.

Belongs to the YbaB/EbfC family. Homodimer.

It localises to the cytoplasm. It is found in the nucleoid. In terms of biological role, binds to DNA and alters its conformation. May be involved in regulation of gene expression, nucleoid organization and DNA protection. The sequence is that of Nucleoid-associated protein swp_1717 from Shewanella piezotolerans (strain WP3 / JCM 13877).